The chain runs to 364 residues: UDP-N-acetylglucosamine--N-acetylmuramyl-(pentapeptide) pyrophosphoryl-undecaprenol N-acetylglucosamine transferase (364 aa).

Residues 15-17 (TGG), Asn-123, Arg-164, Ser-191, and Gln-286 contribute to the UDP-N-acetyl-alpha-D-glucosamine site.

This sequence belongs to the glycosyltransferase 28 family. MurG subfamily.

It is found in the cell inner membrane. It carries out the reaction di-trans,octa-cis-undecaprenyl diphospho-N-acetyl-alpha-D-muramoyl-L-alanyl-D-glutamyl-meso-2,6-diaminopimeloyl-D-alanyl-D-alanine + UDP-N-acetyl-alpha-D-glucosamine = di-trans,octa-cis-undecaprenyl diphospho-[N-acetyl-alpha-D-glucosaminyl-(1-&gt;4)]-N-acetyl-alpha-D-muramoyl-L-alanyl-D-glutamyl-meso-2,6-diaminopimeloyl-D-alanyl-D-alanine + UDP + H(+). The protein operates within cell wall biogenesis; peptidoglycan biosynthesis. Its function is as follows. Cell wall formation. Catalyzes the transfer of a GlcNAc subunit on undecaprenyl-pyrophosphoryl-MurNAc-pentapeptide (lipid intermediate I) to form undecaprenyl-pyrophosphoryl-MurNAc-(pentapeptide)GlcNAc (lipid intermediate II). In Prochlorococcus marinus subsp. pastoris (strain CCMP1986 / NIES-2087 / MED4), this protein is UDP-N-acetylglucosamine--N-acetylmuramyl-(pentapeptide) pyrophosphoryl-undecaprenol N-acetylglucosamine transferase.